We begin with the raw amino-acid sequence, 462 residues long: Argininosuccinate lyase (462 aa).

The protein belongs to the lyase 1 family. Argininosuccinate lyase subfamily.

The protein localises to the cytoplasm. It carries out the reaction 2-(N(omega)-L-arginino)succinate = fumarate + L-arginine. Its pathway is amino-acid biosynthesis; L-arginine biosynthesis; L-arginine from L-ornithine and carbamoyl phosphate: step 3/3. This Xanthobacter autotrophicus (strain ATCC BAA-1158 / Py2) protein is Argininosuccinate lyase.